The chain runs to 616 residues: Protein RIK (616 aa).

Over residues 1–11 the composition is skewed to basic and acidic residues; it reads MTEDRAHKVAD. The disordered stretch occupies residues 1–32; that stretch reads MTEDRAHKVADEPAASGRQSPERKKRKWDQPA. One can recognise a KH domain in the interval 198 to 304; that stretch reads GTTSESISVP…AKVLAENLLD (107 aa). 3 stretches are compositionally biased toward polar residues: residues 432–449, 475–484, and 491–502; these read TQAV…TKGN, TESQNSQQGS, and LDSSGNIGSSSI. Disordered stretches follow at residues 432–455 and 467–616; these read TQAV…LDAE and LPVS…HTCV. Residues 534-564 are compositionally biased toward pro residues; sequence LPPPLKSMLPLPPRSMPPPPPKSMPPPPPKF. 2 stretches are compositionally biased toward basic and acidic residues: residues 565-575 and 598-610; these read PSDEFLSRNEN and SERR…EEKN.

In terms of assembly, interacts with RS2. Expressed in vegetative tissues. More abundant in apices and young leaf primordia than in fully expanded leaf tissues.

The protein localises to the nucleus. In Zea mays (Maize), this protein is Protein RIK.